Reading from the N-terminus, the 456-residue chain is UDP-N-acetylmuramate--L-alanine ligase (456 aa).

114–120 contacts ATP; the sequence is GTHGKTT.

The protein belongs to the MurCDEF family.

The protein resides in the cytoplasm. The catalysed reaction is UDP-N-acetyl-alpha-D-muramate + L-alanine + ATP = UDP-N-acetyl-alpha-D-muramoyl-L-alanine + ADP + phosphate + H(+). It participates in cell wall biogenesis; peptidoglycan biosynthesis. Functionally, cell wall formation. The chain is UDP-N-acetylmuramate--L-alanine ligase (murC) from Porphyromonas gingivalis (strain ATCC BAA-308 / W83).